Here is a 487-residue protein sequence, read N- to C-terminus: MDKGLHFIFCVVTAVLLLRESSQTGAMRNDDAMIKPNDLRGPEENLPSLTVTTILEDPYVMVRSAELEGYCIDLLKALASMLHFSYKVKVVGDGKYGAISPSGNWTGMIGEILRQEADIAVAPLTVTSAREEVVSFTTPFLQTGIGILLRKETISQEMSFFHFLAPFSKETWTGLLFAYVLTCVCLFLVARLSPCEWNEPKNEENHFTFLNSLWFGAGALTLQGVTPRPKAFSVRVIAAIWWLFTIALLAAYIANFTALLSSGSEQLSIQTFEDLVKQRKLEFGTLDGSSTFYFFKNSKNPIHRMVYEYMDKRRDHVLVKTYQEAVQRVMESNYAFIGESISQDLAAARHCNLIRAPEVIGARGFGIATAQASPWTKKLSVAVLKLRETGDLDYLRNKWWESSCLHKSREGWSPLQPQALGGLFLTLAIGLALGVIAAMVELSNKSRHAAGHIKKSCCSIFTEEMCTRLRIKENTRQTQETSGRANA.

The signal sequence occupies residues 1-23 (MDKGLHFIFCVVTAVLLLRESSQ). Residues 24–169 (TGAMRNDDAM…FFHFLAPFSK (146 aa)) are Extracellular-facing. A glycan (N-linked (GlcNAc...) asparagine) is linked at Asn-104. The helical transmembrane segment at 170-190 (ETWTGLLFAYVLTCVCLFLVA) threads the bilayer. Over 191-235 (RLSPCEWNEPKNEENHFTFLNSLWFGAGALTLQGVTPRPKAFSVR) the chain is Cytoplasmic. A helical transmembrane segment spans residues 236–256 (VIAAIWWLFTIALLAAYIANF). At 257 to 419 (TALLSSGSEQ…EGWSPLQPQA (163 aa)) the chain is on the extracellular side. The chain crosses the membrane as a helical span at residues 420–440 (LGGLFLTLAIGLALGVIAAMV). Residues 441–487 (ELSNKSRHAAGHIKKSCCSIFTEEMCTRLRIKENTRQTQETSGRANA) are Cytoplasmic-facing.

Belongs to the glutamate-gated ion channel (TC 1.A.10.1) family.

Its subcellular location is the cell membrane. The protein resides in the postsynaptic cell membrane. In terms of biological role, receptor for glutamate. L-glutamate acts as an excitatory neurotransmitter at many synapses in the central nervous system. The postsynaptic actions of Glu are mediated by a variety of receptors that are named according to their selective agonists. This Gallus gallus (Chicken) protein is Probable glutamate receptor (KBP).